A 79-amino-acid chain; its full sequence is Acyl carrier protein (79 aa).

The region spanning 2-77 (SDVAERVKKI…DAIDFIKANA (76 aa)) is the Carrier domain. At serine 37 the chain carries O-(pantetheine 4'-phosphoryl)serine.

The protein belongs to the acyl carrier protein (ACP) family. In terms of processing, 4'-phosphopantetheine is transferred from CoA to a specific serine of apo-ACP by AcpS. This modification is essential for activity because fatty acids are bound in thioester linkage to the sulfhydryl of the prosthetic group.

It is found in the cytoplasm. It participates in lipid metabolism; fatty acid biosynthesis. Functionally, carrier of the growing fatty acid chain in fatty acid biosynthesis. This chain is Acyl carrier protein, found in Azospirillum brasilense.